Reading from the N-terminus, the 402-residue chain is Nicotinate phosphoribosyltransferase (402 aa).

Histidine 221 carries the phosphohistidine; by autocatalysis modification.

It belongs to the NAPRTase family. Transiently phosphorylated on a His residue during the reaction cycle. Phosphorylation strongly increases the affinity for substrates and increases the rate of nicotinate D-ribonucleotide production. Dephosphorylation regenerates the low-affinity form of the enzyme, leading to product release.

The catalysed reaction is nicotinate + 5-phospho-alpha-D-ribose 1-diphosphate + ATP + H2O = nicotinate beta-D-ribonucleotide + ADP + phosphate + diphosphate. It functions in the pathway cofactor biosynthesis; NAD(+) biosynthesis; nicotinate D-ribonucleotide from nicotinate: step 1/1. Its function is as follows. Catalyzes the synthesis of beta-nicotinate D-ribonucleotide from nicotinate and 5-phospho-D-ribose 1-phosphate at the expense of ATP. This is Nicotinate phosphoribosyltransferase from Sodalis glossinidius (strain morsitans).